The following is a 255-amino-acid chain: Formate hydrogenlyase subunit 7 (255 aa).

Residues Cys45, Cys51, Cys115, and Cys145 each contribute to the [4Fe-4S] cluster site.

It belongs to the complex I 20 kDa subunit family. In terms of assembly, FHL comprises of a formate dehydrogenase, unidentified electron carriers and a hydrogenase (isoenzyme 3). In this non-energy conserving pathway molecular hydrogen and carbodioxide from formate are released. It depends on [4Fe-4S] cluster as a cofactor.

In Escherichia coli (strain K12), this protein is Formate hydrogenlyase subunit 7 (hycG).